The following is a 143-amino-acid chain: 3-hydroxyacyl-[acyl-carrier-protein] dehydratase FabZ (143 aa).

Residue His47 is part of the active site.

It belongs to the thioester dehydratase family. FabZ subfamily.

It is found in the cytoplasm. The catalysed reaction is a (3R)-hydroxyacyl-[ACP] = a (2E)-enoyl-[ACP] + H2O. Its function is as follows. Involved in unsaturated fatty acids biosynthesis. Catalyzes the dehydration of short chain beta-hydroxyacyl-ACPs and long chain saturated and unsaturated beta-hydroxyacyl-ACPs. This is 3-hydroxyacyl-[acyl-carrier-protein] dehydratase FabZ from Moorella thermoacetica (strain ATCC 39073 / JCM 9320).